The sequence spans 291 residues: Gamma-sarcoglycan (291 aa).

At 1–37 (MVREQYTTVTEGTHIERPENQHIYKIGIYGWRKRCLY) the chain is on the cytoplasmic side. A helical; Signal-anchor for type II membrane protein transmembrane segment spans residues 38-58 (LFVLLLLAILVVNLALTIWIL). Residues 59–291 (KVMWFSPIGM…TCEEHSHVCL (233 aa)) lie on the Extracellular side of the membrane. Asn-110 is a glycosylation site (N-linked (GlcNAc...) asparagine). 2 disulfides stabilise this stretch: Cys-265–Cys-290 and Cys-267–Cys-283.

The protein belongs to the sarcoglycan beta/delta/gamma/zeta family. As to quaternary structure, interacts with the syntrophin SNTA1 and FLNC. Cross-link to form 2 major subcomplexes: one consisting of SGCB, SGCD and SGCG and the other consisting of SGCB and SGCD. The association between SGCB and SGCG is particularly strong while SGCA is loosely associated with the other sarcoglycans. Most strongly expressed in skeletal and heart muscle. Also detected in proliferating myoblasts.

It localises to the cell membrane. Its subcellular location is the sarcolemma. The protein resides in the cytoplasm. It is found in the cytoskeleton. Functionally, component of the sarcoglycan complex, a subcomplex of the dystrophin-glycoprotein complex which forms a link between the F-actin cytoskeleton and the extracellular matrix. The chain is Gamma-sarcoglycan (Sgcg) from Mus musculus (Mouse).